The chain runs to 218 residues: Glutathione S-transferase Mu 6 (218 aa).

The region spanning 1 to 88 (MPVTLGYWDI…YLGRKHNLCG (88 aa)) is the GST N-terminal domain. Residues 7–8 (YW), 46–50 (WLNDK), 59–60 (NL), and 72–73 (QS) contribute to the glutathione site. The 119-residue stretch at 90–208 (TEEERIRVDI…KTSRFLPSPV (119 aa)) folds into the GST C-terminal domain. Y116 provides a ligand contact to substrate.

This sequence belongs to the GST superfamily. Mu family. Homodimer. Expressed in liver, stomach and small intestine. Not expressed in spleen, kidney, colon, heart, muscle, brain or lung.

The protein resides in the cytoplasm. It carries out the reaction RX + glutathione = an S-substituted glutathione + a halide anion + H(+). Its function is as follows. Conjugation of reduced glutathione to a wide number of exogenous and endogenous hydrophobic electrophiles. The sequence is that of Glutathione S-transferase Mu 6 (Gstm6) from Mus musculus (Mouse).